The sequence spans 182 residues: Translation initiation factor IF-3 (182 aa).

This sequence belongs to the IF-3 family. Monomer.

The protein localises to the cytoplasm. IF-3 binds to the 30S ribosomal subunit and shifts the equilibrium between 70S ribosomes and their 50S and 30S subunits in favor of the free subunits, thus enhancing the availability of 30S subunits on which protein synthesis initiation begins. The chain is Translation initiation factor IF-3 from Thermosynechococcus vestitus (strain NIES-2133 / IAM M-273 / BP-1).